A 386-amino-acid chain; its full sequence is Methionine aminopeptidase 1 (386 aa).

A2 is subject to N-acetylalanine. The C6H2-type zinc-finger motif lies at 6-59 (TRVCETDGCSSEAKLQCPTCIKLGIQGSYFCSQECFKGSWATHKLLHKKAKDEK). Zn(2+) is bound by residues C9, C14, C22, C25, C36, C40, H48, and H52. A protein is bound at residue H203. Zn(2+) contacts are provided by D220, D231, and H294. An a protein-binding site is contributed by H301. Zn(2+) contacts are provided by E327 and E358.

It belongs to the peptidase M24A family. Methionine aminopeptidase type 1 subfamily. Associates with the 60S ribosomal subunit of the 80S translational complex. It depends on Zn(2+) as a cofactor. Requires Co(2+) as cofactor. Mn(2+) is required as a cofactor. Fe(2+) serves as cofactor.

It localises to the cytoplasm. It catalyses the reaction Release of N-terminal amino acids, preferentially methionine, from peptides and arylamides.. Its function is as follows. Cotranslationally removes the N-terminal methionine from nascent proteins. The N-terminal methionine is often cleaved when the second residue in the primary sequence is small and uncharged (Met-Ala-, Cys, Gly, Pro, Ser, Thr, or Val). Required for normal progression through the cell cycle. The protein is Methionine aminopeptidase 1 (METAP1) of Homo sapiens (Human).